Consider the following 229-residue polypeptide: 2-C-methyl-D-erythritol 4-phosphate cytidylyltransferase (229 aa).

Belongs to the IspD/TarI cytidylyltransferase family. IspD subfamily.

It carries out the reaction 2-C-methyl-D-erythritol 4-phosphate + CTP + H(+) = 4-CDP-2-C-methyl-D-erythritol + diphosphate. It functions in the pathway isoprenoid biosynthesis; isopentenyl diphosphate biosynthesis via DXP pathway; isopentenyl diphosphate from 1-deoxy-D-xylulose 5-phosphate: step 2/6. In terms of biological role, catalyzes the formation of 4-diphosphocytidyl-2-C-methyl-D-erythritol from CTP and 2-C-methyl-D-erythritol 4-phosphate (MEP). The sequence is that of 2-C-methyl-D-erythritol 4-phosphate cytidylyltransferase from Clostridium botulinum (strain Loch Maree / Type A3).